The primary structure comprises 704 residues: Elongation factor G (704 aa).

Residues asparagine 10–leucine 290 form the tr-type G domain. Residues alanine 19–threonine 26, aspartate 83–histidine 87, and asparagine 137–aspartate 140 contribute to the GTP site.

It belongs to the TRAFAC class translation factor GTPase superfamily. Classic translation factor GTPase family. EF-G/EF-2 subfamily.

The protein localises to the cytoplasm. Its function is as follows. Catalyzes the GTP-dependent ribosomal translocation step during translation elongation. During this step, the ribosome changes from the pre-translocational (PRE) to the post-translocational (POST) state as the newly formed A-site-bound peptidyl-tRNA and P-site-bound deacylated tRNA move to the P and E sites, respectively. Catalyzes the coordinated movement of the two tRNA molecules, the mRNA and conformational changes in the ribosome. The chain is Elongation factor G from Clavibacter sepedonicus (Clavibacter michiganensis subsp. sepedonicus).